The sequence spans 388 residues: DNA ADP-ribosyl transferase-DNA ADP-ribosyl glycohydrolase fusion protein (388 aa).

The DarT domain occupies 6-197 (RELYYITHID…PVIPDPTFFF (192 aa)). NAD(+)-binding positions include 10–12 (YIT) and R50. The tract at residues 34–52 (QSINCKKVYDNSIVLKRKS) is NAD(+)-binding element. Residue R50 is the Proton acceptor of the active site. Residues 107 to 152 (TDGNAASSETQIYRKSEIKNIKNIISVKDMEYWREEDGSKRKIMAE) form an ADP-ribosylating turn-turn loop region. Residue E152 is part of the active site. Residues 196–376 (FFLPNREIKL…IYLPLEKRIP (181 aa)) form the Macro domain. ADP-D-ribose-binding positions include 215 to 216 (DM), 227 to 229 (SVN), T301, 339 to 343 (GCGLG), and 371 to 372 (LE).

It in the N-terminal section; belongs to the DarT ADP-ribosyltransferase family. In the C-terminal section; belongs to the DarG ADP-ribosyl glycohydrolase family.

It catalyses the reaction an N-(ADP-alpha-D-ribosyl)-thymidine in DNA + H2O = a thymidine in DNA + ADP-D-ribose. The catalysed reaction is a thymidine in DNA + NAD(+) = an N-(ADP-alpha-D-ribosyl)-thymidine in DNA + nicotinamide + H(+). Its function is as follows. A fusion protein of the toxic and antitoxin components of a hybrid type II/IV toxin-antitoxin (TA) system. The N-terminal domain ADP-ribosylates ssDNA on a thymidine residue, while the C-terminal domain removes the modification, neutralizing the toxic effect. This chain is DNA ADP-ribosyl transferase-DNA ADP-ribosyl glycohydrolase fusion protein, found in Thermosipho africanus (strain H17ap60334).